A 462-amino-acid chain; its full sequence is Argininosuccinate lyase (462 aa).

It belongs to the lyase 1 family. Argininosuccinate lyase subfamily.

The protein localises to the cytoplasm. The enzyme catalyses 2-(N(omega)-L-arginino)succinate = fumarate + L-arginine. The protein operates within amino-acid biosynthesis; L-arginine biosynthesis; L-arginine from L-ornithine and carbamoyl phosphate: step 3/3. The protein is Argininosuccinate lyase of Prochlorococcus marinus (strain SARG / CCMP1375 / SS120).